Here is a 205-residue protein sequence, read N- to C-terminus: Ribosomal RNA small subunit methyltransferase G (205 aa).

Residues G73, L78, 124 to 125, and R138 contribute to the S-adenosyl-L-methionine site; that span reads VE.

The protein belongs to the methyltransferase superfamily. RNA methyltransferase RsmG family.

It localises to the cytoplasm. It catalyses the reaction guanosine(527) in 16S rRNA + S-adenosyl-L-methionine = N(7)-methylguanosine(527) in 16S rRNA + S-adenosyl-L-homocysteine. In terms of biological role, specifically methylates the N7 position of guanine in position 527 of 16S rRNA. This is Ribosomal RNA small subunit methyltransferase G from Actinobacillus pleuropneumoniae serotype 7 (strain AP76).